Reading from the N-terminus, the 644-residue chain is Cell pattern formation-associated protein StuA (644 aa).

A compositionally biased stretch (low complexity) spans 18 to 33 (ATAHAPASAAPSGISH). Disordered regions lie at residues 18–58 (ATAH…PGYP) and 86–120 (QLPA…APPG). The span at 38–47 (PQSSMMQPGQ) shows a compositional bias: polar residues. Over residues 87 to 104 (LPAMSSSGPSPSLSGAQS) the composition is skewed to low complexity. The 107-residue stretch at 124–230 (RVTATLWEDE…HDIGALLYHP (107 aa)) folds into the HTH APSES-type domain. The segment at residues 158–179 (GTKLLNVAGMTRGRRDGILKSE) is a DNA-binding region (H-T-H motif). A disordered region spans residues 239–644 (GSAAMAAVDR…HTMTAQRARR (406 aa)). Residues 253 to 269 (SMQTQRYISGPTTSQPP) show a composition bias toward polar residues. Low complexity predominate over residues 315-328 (SASSIMGMSNSGSS). Polar residues-rich tracts occupy residues 334-357 (ANVQ…TRSV), 371-383 (QAIS…SYDN), and 395-404 (PGQYNTQGQS). Residues 456-465 (EGDHEHDNEY) show a composition bias toward basic and acidic residues. Low complexity predominate over residues 509 to 524 (GSGRATPRTTTTSQTQ). The span at 525–544 (WNSGYPTPQRQGPPSSNLYN) shows a compositional bias: polar residues. The segment at 584–612 (KRGRDDDDEDPYRPDSVQSDDMGGLKRRK) is nuclear localization domain. The span at 635–644 (HTMTAQRARR) shows a compositional bias: polar residues.

This sequence belongs to the EFG1/PHD1/stuA family.

The protein resides in the nucleus. Its function is as follows. Transcription factor that regulates asexual reproduction. Binds the StuA-response elements (StRE) with the consensus sequence 5'-(A/T)CGCG(T/A)N(A/C)-3' at the promoters of target genes. Required for pathogenicity and positively regulates the synthesis of the mycotoxin alternariol. Acts as a positive regulator of Tox3 but is not required for the expression of ToxA. Also acts as a central regulator of carbon metabolism including glycolysis, the TCA cycle, and amino acid synthesis. This chain is Cell pattern formation-associated protein StuA, found in Phaeosphaeria nodorum (strain SN15 / ATCC MYA-4574 / FGSC 10173) (Glume blotch fungus).